A 413-amino-acid polypeptide reads, in one-letter code: MISRHFTVLTALNLQTKIKICIRNFSIRGAMTKVNGNSNGNGISASTDLLDTPSAYTQKSNKTHTSIDLRSDTVTVPSVEMRRAMAEAIVGDDVYGEDTTTNRLEQRCAELFGKEAGLFVTSGTMGNLLAIMAHCQRGEEIIVGRYNHIHRWEQGNYAQFAGISATTLEVKPDGTMDLNDIEQAIRVKDCHMPASKLICIENTHNYTGGKALPIEWMRSVKQLAERRDLKVHMDGARIYNAAVASNCSVSKIASFADTVQMCFSKGLGAPVGSIVVGPKDFIDRARHSRKALGGGWRQSGILAAAAHIALDHADATIRADHERAKTLARMINDATPEEFRTKVFAAEKDITNMVLVHCQNGVTVQQLTDFFQKHDILAMTFDARRIRMVLNWNVSDENLETIVEVYKKFLKQL.

Lys-265 is subject to N6-(pyridoxal phosphate)lysine.

This sequence belongs to the threonine aldolase family. It depends on pyridoxal 5'-phosphate as a cofactor.

This is an uncharacterized protein from Caenorhabditis elegans.